The chain runs to 144 residues: (R)-specific enoyl-CoA hydratase (144 aa).

The 116-residue stretch at 13-128 folds into the MaoC-like domain; the sequence is DIKEGQSASL…TFRTTCTVAG (116 aa).

As to quaternary structure, homotetramer.

The enzyme catalyses a (3R)-3-hydroxyacyl-CoA = a (2E)-enoyl-CoA + H2O. In terms of biological role, catalyzes the hydration of trans-2-enoyl-CoAs with a chain-length of 4-6 carbon atoms, forming the corresponding (3R)-3-hydroxyacyl-CoAs, which can then be utilized for the production of polyhydroxyalkanoates (PHA) polymers. Cannot use trans-2,3-octenoyl-CoA as substrate. The polypeptide is (R)-specific enoyl-CoA hydratase (Rhodospirillum rubrum (strain ATCC 11170 / ATH 1.1.1 / DSM 467 / LMG 4362 / NCIMB 8255 / S1)).